We begin with the raw amino-acid sequence, 149 residues long: Cytochrome c-type biogenesis protein CcmE (149 aa).

Residues 1 to 7 (MTRKQKR) lie on the Cytoplasmic side of the membrane. A helical; Signal-anchor for type II membrane protein transmembrane segment spans residues 8–28 (LAVIAGGMGFIATAVLLVLFA). Over 29 to 149 (FSQSVAYFYM…GVWKGEEASQ (121 aa)) the chain is Periplasmic. Residues H123 and Y127 each coordinate heme.

The protein belongs to the CcmE/CycJ family.

It is found in the cell inner membrane. Functionally, heme chaperone required for the biogenesis of c-type cytochromes. Transiently binds heme delivered by CcmC and transfers the heme to apo-cytochromes in a process facilitated by CcmF and CcmH. The protein is Cytochrome c-type biogenesis protein CcmE of Rhizobium rhizogenes (strain K84 / ATCC BAA-868) (Agrobacterium radiobacter).